We begin with the raw amino-acid sequence, 648 residues long: MKEFKFNDEQLSTIQELEVDIDLKKLEIAISKESIDELSEDELLALLKVTNALYRSGFPVIEDILYDSFWNKFALNHPNHPFITSVETEVLNLGKTVALPQKMLSTDKAYSKEEIKKWLDRILKAAEELDIDTNEIEIRITPKLDGYAAFDDGERLYTRGDGVKGQDVSRAFERGLKVVRNSERGLGAGEIVINKAYFEKKLSQYFENSRNIQAAIIAEKNVDERVLEAIKEGACVFHPFAVLPNWTGNYQDLMTDFDGIIEQVWNSVEYDVDGVILEATDTRIKEHMGANRKFHRWQIAFKINDEVAEVEVISVTPQTSRTGRVTPVAELVPTRISGAMISRVTVHHYNMVKINGVGPGAIVQIVRSGLVIPKIEKVIKPVDPQMPELCPSCKSHLLWESDHLVCPNKSDCPAQTENTLVHFFKTLANNDGFGPKNIEKLANLGVKHIHQMYDLKPHQFAMYGFGEKTSKNLYDQLQASKNIEIEDWRFLSAFGVSRLGGGNCEKLLQHYSLRELFEATVEDIAELNGFARVSAEAIVKGLANIKEEFFKVYDLGFNLSITPKQSELESLASPLTGKIVVFTGKMLQGKRSDMEKHAKALGAKVGTSVTSNTTYLIAGLKVGETKINDAKEKGVKVLSEQEYLDLIS.

NAD(+) is bound by residues 63–67 and 105–106; these read DILYD and ST. Residue Lys-143 is the N6-AMP-lysine intermediate of the active site. NAD(+) contacts are provided by Arg-159, Glu-190, and Lys-302. 4 residues coordinate Zn(2+): Cys-390, Cys-393, Cys-406, and Cys-412. In terms of domain architecture, BRCT spans 570–648; it reads SLASPLTGKI…SEQEYLDLIS (79 aa).

This sequence belongs to the NAD-dependent DNA ligase family. LigA subfamily. Mg(2+) is required as a cofactor. The cofactor is Mn(2+).

The catalysed reaction is NAD(+) + (deoxyribonucleotide)n-3'-hydroxyl + 5'-phospho-(deoxyribonucleotide)m = (deoxyribonucleotide)n+m + AMP + beta-nicotinamide D-nucleotide.. DNA ligase that catalyzes the formation of phosphodiester linkages between 5'-phosphoryl and 3'-hydroxyl groups in double-stranded DNA using NAD as a coenzyme and as the energy source for the reaction. It is essential for DNA replication and repair of damaged DNA. This is DNA ligase from Shewanella baltica (strain OS155 / ATCC BAA-1091).